A 745-amino-acid chain; its full sequence is A-kinase anchor protein 5 (745 aa).

Residues 1–121 form a disordered region; that stretch reads METSVSEIQV…KKKAKSRLKF (121 aa). The essential to the intracellular anchoring function stretch occupies residues 1 to 164; it reads METSVSEIQV…EIKAQTQPDD (164 aa). Phosphoserine is present on residues S4 and S22. C36 carries the S-palmitoyl cysteine lipid modification. Residues 37-50 show a composition bias toward basic residues; sequence FKRRKKANKTKPKA. 2 stretches are compositionally biased toward basic and acidic residues: residues 54–63 and 90–100; these read TAEETKKHTP and SEPAKKQKPPE. The AKAP CaM-binding signature appears at 74-94; it reads AGAWASIKGLVTHRKRSEPAK. The S-palmitoyl cysteine moiety is linked to residue C123. Residues 162 to 175 are compositionally biased toward polar residues; sequence PDDQAIQAGSTQGL. 2 disordered regions span residues 162–195 and 215–392; these read PDDQ…ISNS and AIQM…DHTE. Basic and acidic residues-rich tracts occupy residues 180-189 and 222-231; these read LVRDGKKSQE and ELEKETKVIT. Polar residues predominate over residues 234–268; the sequence is PSVQTQRASLLESSAAGSPRSVTSAAPPSPATTHQ. Basic and acidic residues predominate over residues 285 to 300; that stretch reads GKDDRRKTAAEEKKSG. The 1; approximate repeat unit spans residues 304–312; it reads LGQAEEAAV. Positions 304–628 are 28 X 8 AA repeats of V-G-Q-A-E-E-A-T; sequence LGQAEEAAVG…PTVDQAEEAI (325 aa). The stretch at 320–327 is one 2; approximate repeat; sequence LSQAGEAT. One copy of the 3; approximate repeat lies at 328–335; sequence AGHPEEAT. A 4; approximate repeat occupies 348 to 355; the sequence is LSQAEETT. A 5; approximate repeat occupies 356–363; that stretch reads VAQAKETV. One copy of the 6; approximate repeat lies at 364 to 395; it reads LSQAKEGELSQAKKATVGQAEEATIDHTEKVT. One copy of the 7; approximate repeat lies at 420-436; that stretch reads LSQAKEATVVGQAEEAT. The stretch at 445-452 is one 8; approximate repeat; that stretch reads VGQAEEAT. Tandem repeats lie at residues 461-468, 469-476, 477-484, 485-492, and 493-500. Positions 466-560 are disordered; it reads EATVGQAEEA…QAEEATVGQA (95 aa). The 14; approximate repeat unit spans residues 501–508; it reads VGQAEEAT. A 15; approximate repeat occupies 517 to 524; it reads VDQAEEAT. 4 consecutive repeat copies span residues 525 to 532, 533 to 540, 541 to 548, and 549 to 556. Basic and acidic residues predominate over residues 535–546; the sequence is HTEKVTVDHAEE. One copy of the 20; approximate repeat lies at 557 to 564; sequence VGQAEKVT. The stretch at 565–572 is repeat 21; sequence VDHAEEAT. The stretch at 573-580 is one 22; approximate repeat; the sequence is VGQAEEAT. The 23; approximate repeat unit spans residues 581 to 588; sequence VGQAEKVT. The stretch at 589 to 596 is one 24; approximate repeat; the sequence is VDHAEEAT. Repeat 25 spans residues 597 to 604; it reads VGQAEEAT. Residues 605–612 form a 26; approximate repeat; it reads VGQAEKVT. The stretch at 613-620 is one 27; approximate repeat; sequence VDQAEEPT. Residues 617–651 form a disordered region; sequence EEPTVDQAEEAISSHAPDLKENGIDTEKPRSEESK. One copy of the 28; approximate repeat lies at 621–628; the sequence is VDQAEEAI. Residues 633–651 show a composition bias toward basic and acidic residues; sequence PDLKENGIDTEKPRSEESK. An RII-beta subunit binding domain region spans residues 706–727; that stretch reads YETLLIETASSLVKNAIELSVE. The tethers NFATC2 to CRAC channels stretch occupies residues 728–745; that stretch reads QLVNEMVSEDNQINTLFQ.

As to quaternary structure, binding protein for dimer of the RII-beta regulatory subunit of cAMP-dependent protein kinase (PKA) and also for the protein kinase C (PKC) and the phosphatase calcineurin (PP2B). Each enzyme is inhibited when bound to the anchoring protein. Also binds the beta2-adrenergic receptor. Part of a complex containing AKAP5, ADCY5, ADCY6 and PDE4C. Interacts with ADCY8, and enhances its phosphorylation at lipid rafts. Interacts with ORAI1 (isoform alpha) (via N-terminus) upon store depletion and in response to LTC4. Does not interact with ORAI2 and ORAI3 paralogs. Interacts (via leucine zipper domain) with NFATC2/NFAT1. Interacts with calmodulin; the interaction is calcium-independent. Interacts with KCNQ2; the interaction may help KCNQ2 channel complex to retain calcium-bound calmodulin. Interacts with KCNK2; the channel is recruited to postsynaptic microdomains by AKAP5 where it can integrate neurotransmitter receptor signals. Part of a complex composed of AKAP5 and ADRB2. Palmitoylated. Palmitoylation at Cys-36 and Cys-123 play a key role in the targeting of AKAP5 to lipid rafts. Palmitoylation by ZDHHC2 is required for AKAP5 function in LTP-stimulated recycling endosome exocytosis.

It localises to the postsynaptic recycling endosome membrane. The protein localises to the cell projection. It is found in the dendrite. The protein resides in the postsynaptic cell membrane. Its function is as follows. Multivalent scaffold protein that anchors the cAMP-dependent protein kinase/PKA to cytoskeletal and/or organelle-associated proteins, targeting the signal carried by cAMP to specific intracellular effectors. Association with the beta2-adrenergic receptor (beta2-AR) not only regulates beta2-AR signaling pathway, but also the activation by PKA by switching off the beta2-AR signaling cascade. Plays a role in long term synaptic potentiation by regulating protein trafficking from the dendritic recycling endosomes to the plasma membrane and controlling both structural and functional plasticity at excitatory synapses. In hippocampal pyramidal neurons, recruits KCNK2/TREK-1 channel at postsynaptic dense bodies microdomains and converts it to a leak channel no longer sensitive to stimulation by arachidonic acid, acidic pH or mechanical stress, nor inhibited by Gq-coupled receptors but still under the negative control of Gs-coupled receptors. Associates with ORAI1 pore-forming subunit of CRAC channels in Ca(2+) signaling microdomains where it recruits NFATC2/NFAT1 and couples store-operated Ca(2+) influx to calmodulin and calcineurin signaling and activation of NFAT-dependent transcriptional responses. In Mus musculus (Mouse), this protein is A-kinase anchor protein 5 (Akap5).